The sequence spans 217 residues: Adenylate kinase (217 aa).

10-15 (GAGKGT) is an ATP binding site. The tract at residues 30–59 (STGDMFRAAMKEETDLGLEAKSYIDKGELV) is NMP. AMP-binding positions include Thr31, Arg36, 57 to 59 (ELV), 85 to 88 (GFPR), and Gln92. The interval 126-163 (GRRICKNCGATYHLVFNPPAKENVCDKCGGELYQREDD) is LID. Arg127 lines the ATP pocket. Positions 130 and 133 each coordinate Zn(2+). 136 to 137 (TY) provides a ligand contact to ATP. 2 residues coordinate Zn(2+): Cys150 and Cys153. The AMP site is built by Arg160 and Arg171. Position 199 (Lys199) interacts with ATP.

This sequence belongs to the adenylate kinase family. Monomer.

The protein localises to the cytoplasm. The catalysed reaction is AMP + ATP = 2 ADP. The protein operates within purine metabolism; AMP biosynthesis via salvage pathway; AMP from ADP: step 1/1. Functionally, catalyzes the reversible transfer of the terminal phosphate group between ATP and AMP. Plays an important role in cellular energy homeostasis and in adenine nucleotide metabolism. This Bacillus licheniformis (strain ATCC 14580 / DSM 13 / JCM 2505 / CCUG 7422 / NBRC 12200 / NCIMB 9375 / NCTC 10341 / NRRL NRS-1264 / Gibson 46) protein is Adenylate kinase.